Here is an 82-residue protein sequence, read N- to C-terminus: ATP synthase subunit c, chloroplastic (82 aa).

Helical transmembrane passes span proline 3–glycine 23 and phenylalanine 57–alanine 77.

It belongs to the ATPase C chain family. In terms of assembly, F-type ATPases have 2 components, F(1) - the catalytic core - and F(0) - the membrane proton channel. F(1) has five subunits: alpha(3), beta(3), gamma(1), delta(1), epsilon(1). F(0) has four main subunits: a(1), b(1), b'(1) and c(10-14). The alpha and beta chains form an alternating ring which encloses part of the gamma chain. F(1) is attached to F(0) by a central stalk formed by the gamma and epsilon chains, while a peripheral stalk is formed by the delta, b and b' chains.

The protein resides in the plastid. It is found in the chloroplast thylakoid membrane. F(1)F(0) ATP synthase produces ATP from ADP in the presence of a proton or sodium gradient. F-type ATPases consist of two structural domains, F(1) containing the extramembraneous catalytic core and F(0) containing the membrane proton channel, linked together by a central stalk and a peripheral stalk. During catalysis, ATP synthesis in the catalytic domain of F(1) is coupled via a rotary mechanism of the central stalk subunits to proton translocation. Its function is as follows. Key component of the F(0) channel; it plays a direct role in translocation across the membrane. A homomeric c-ring of between 10-14 subunits forms the central stalk rotor element with the F(1) delta and epsilon subunits. This Mesostigma viride (Green alga) protein is ATP synthase subunit c, chloroplastic.